We begin with the raw amino-acid sequence, 323 residues long: Large ribosomal subunit protein uL10x (323 aa).

The interval 287–323 (DAGGGSAQAGAAAKVEEKKEESDEEDYEGGFGLFDEE) is disordered. A Phosphoserine modification is found at Ser-308. The segment covering 308-323 (SDEEDYEGGFGLFDEE) has biased composition (acidic residues). A Phosphotyrosine modification is found at Tyr-313.

It belongs to the universal ribosomal protein uL10 family. In terms of assembly, P0 forms a pentameric complex by interaction with dimers of P1 and P2.

In terms of biological role, ribosomal protein P0 is the functional equivalent of E.coli protein L10. This is Large ribosomal subunit protein uL10x (RPP0C) from Arabidopsis thaliana (Mouse-ear cress).